Here is a 146-residue protein sequence, read N- to C-terminus: uncharacterized protein (146 aa).

4 consecutive transmembrane segments (helical) span residues Met-1–Leu-21, Ala-35–Gly-55, Gly-87–His-107, and Ala-111–Leu-131.

The protein resides in the cell membrane. This is an uncharacterized protein from Mycobacterium tuberculosis (strain CDC 1551 / Oshkosh).